The chain runs to 150 residues: Large ribosomal subunit protein eL19 (150 aa).

Residues 59 to 89 form a disordered region; it reads SRYRARIRHEQKKKGRHRGPGSRKGKKTARM. Over residues 61 to 89 the composition is skewed to basic residues; that stretch reads YRARIRHEQKKKGRHRGPGSRKGKKTARM.

This sequence belongs to the eukaryotic ribosomal protein eL19 family. Part of the 50S ribosomal subunit.

Functionally, binds to the 23S rRNA. The chain is Large ribosomal subunit protein eL19 from Pyrococcus horikoshii (strain ATCC 700860 / DSM 12428 / JCM 9974 / NBRC 100139 / OT-3).